A 743-amino-acid chain; its full sequence is Conserved oligomeric Golgi complex subunit 8 (743 aa).

Disordered stretches follow at residues glutamate 549–glutamate 672 and threonine 704–aspartate 743. Basic and acidic residues-rich tracts occupy residues glutamate 563 to aspartate 581, proline 594 to proline 621, serine 633 to leucine 647, and glutamine 654 to valine 664. Over residues threonine 704–glutamate 726 the composition is skewed to acidic residues. Positions isoleucine 727 to aspartate 743 are enriched in basic and acidic residues.

It belongs to the COG8 family. Component of the conserved oligomeric Golgi complex which is composed of eight different subunits and is required for normal Golgi morphology and localization.

The protein resides in the golgi apparatus membrane. Functionally, required for normal Golgi function. This Caenorhabditis elegans protein is Conserved oligomeric Golgi complex subunit 8 (cogc-8).